A 139-amino-acid chain; its full sequence is Large ribosomal subunit protein uL16 (139 aa).

Positions 1–16 are enriched in basic residues; the sequence is MLIPKRTKYRKQHRPD. Positions 1-23 are disordered; that stretch reads MLIPKRTKYRKQHRPDRHGMSKG.

The protein belongs to the universal ribosomal protein uL16 family. As to quaternary structure, part of the 50S ribosomal subunit.

Functionally, binds 23S rRNA and is also seen to make contacts with the A and possibly P site tRNAs. The sequence is that of Large ribosomal subunit protein uL16 from Bifidobacterium animalis subsp. lactis (strain AD011).